The primary structure comprises 312 residues: tRNA dimethylallyltransferase (312 aa).

An ATP-binding site is contributed by 10-17 (GPTASGKS). 12–17 (TASGKS) provides a ligand contact to substrate. The segment at 35-38 (DSKQ) is interaction with substrate tRNA.

This sequence belongs to the IPP transferase family. Monomer. It depends on Mg(2+) as a cofactor.

It carries out the reaction adenosine(37) in tRNA + dimethylallyl diphosphate = N(6)-dimethylallyladenosine(37) in tRNA + diphosphate. In terms of biological role, catalyzes the transfer of a dimethylallyl group onto the adenine at position 37 in tRNAs that read codons beginning with uridine, leading to the formation of N6-(dimethylallyl)adenosine (i(6)A). In Anaplasma phagocytophilum (strain HZ), this protein is tRNA dimethylallyltransferase.